We begin with the raw amino-acid sequence, 228 residues long: Putative N-acetylmannosamine-6-phosphate 2-epimerase (228 aa).

Belongs to the NanE family.

The enzyme catalyses an N-acyl-D-glucosamine 6-phosphate = an N-acyl-D-mannosamine 6-phosphate. It functions in the pathway amino-sugar metabolism; N-acetylneuraminate degradation; D-fructose 6-phosphate from N-acetylneuraminate: step 3/5. Its function is as follows. Converts N-acetylmannosamine-6-phosphate (ManNAc-6-P) to N-acetylglucosamine-6-phosphate (GlcNAc-6-P). This is Putative N-acetylmannosamine-6-phosphate 2-epimerase from Pasteurella multocida (strain Pm70).